The following is a 563-amino-acid chain: Heat shock 70 kDa protein 8 (563 aa).

A disordered region spans residues 1–25 (MAEAAYTVASDSENTGEEKSSSSPS). N-acetylalanine is present on alanine 2.

Belongs to the heat shock protein 70 (TC 1.A.33) family. DnaK subfamily.

In cooperation with other chaperones, Hsp70s are key components that facilitate folding of de novo synthesized proteins, assist translocation of precursor proteins into organelles, and are responsible for degradation of damaged protein under stress conditions. The protein is Heat shock 70 kDa protein 8 (HSP70-8) of Arabidopsis thaliana (Mouse-ear cress).